The following is a 225-amino-acid chain: Iron-sulfur flavoprotein CD630_04720 (225 aa).

4 residues coordinate [4Fe-4S] cluster: Cys49, Cys52, Cys55, and Cys61.

Belongs to the SsuE family. Isf subfamily. In terms of assembly, homodimer. Requires FMN as cofactor. [4Fe-4S] cluster serves as cofactor.

In terms of biological role, redox-active protein probably involved in electron transport. This chain is Iron-sulfur flavoprotein CD630_04720, found in Clostridioides difficile (strain 630) (Peptoclostridium difficile).